Reading from the N-terminus, the 348-residue chain is Phospho-2-dehydro-3-deoxyheptonate aldolase, Trp-sensitive (348 aa).

This sequence belongs to the class-I DAHP synthase family.

It catalyses the reaction D-erythrose 4-phosphate + phosphoenolpyruvate + H2O = 7-phospho-2-dehydro-3-deoxy-D-arabino-heptonate + phosphate. Its pathway is metabolic intermediate biosynthesis; chorismate biosynthesis; chorismate from D-erythrose 4-phosphate and phosphoenolpyruvate: step 1/7. Its function is as follows. Stereospecific condensation of phosphoenolpyruvate (PEP) and D-erythrose-4-phosphate (E4P) giving rise to 3-deoxy-D-arabino-heptulosonate-7-phosphate (DAHP). This Enterobacter agglomerans (Erwinia herbicola) protein is Phospho-2-dehydro-3-deoxyheptonate aldolase, Trp-sensitive (aroH).